Consider the following 276-residue polypeptide: Probable NADH-ubiquinone oxidoreductase 30.4 kDa subunit, mitochondrial (276 aa).

The disordered stretch occupies residues 248–276 (EPVGEGKDFTPESFKLPTPQPEPEQEEKK).

It belongs to the complex I 30 kDa subunit family. In terms of assembly, complex I is composed of about 30 different subunits. This is a component of the iron-sulfur protein fraction.

The protein resides in the mitochondrion inner membrane. The enzyme catalyses a ubiquinone + NADH + 5 H(+)(in) = a ubiquinol + NAD(+) + 4 H(+)(out). Core subunit of the mitochondrial membrane respiratory chain NADH dehydrogenase (Complex I) that is believed to belong to the minimal assembly required for catalysis. Complex I functions in the transfer of electrons from NADH to the respiratory chain. The immediate electron acceptor for the enzyme is believed to be ubiquinone. Essential for N-alkane assimilation. The polypeptide is Probable NADH-ubiquinone oxidoreductase 30.4 kDa subunit, mitochondrial (ALI1) (Candida maltosa (Yeast)).